The primary structure comprises 210 residues: Guanylate kinase (210 aa).

One can recognise a Guanylate kinase-like domain in the interval 8–188 (GNLFIIAAPS…SLASLEHIVL (181 aa)). Residue 15 to 22 (APSGAGKS) participates in ATP binding.

It belongs to the guanylate kinase family.

The protein localises to the cytoplasm. The catalysed reaction is GMP + ATP = GDP + ADP. Essential for recycling GMP and indirectly, cGMP. The chain is Guanylate kinase from Idiomarina loihiensis (strain ATCC BAA-735 / DSM 15497 / L2-TR).